We begin with the raw amino-acid sequence, 88 residues long: Small ribosomal subunit protein uS17 (88 aa).

The protein belongs to the universal ribosomal protein uS17 family. In terms of assembly, part of the 30S ribosomal subunit.

Its function is as follows. One of the primary rRNA binding proteins, it binds specifically to the 5'-end of 16S ribosomal RNA. This is Small ribosomal subunit protein uS17 from Syntrophotalea carbinolica (strain DSM 2380 / NBRC 103641 / GraBd1) (Pelobacter carbinolicus).